The following is a 217-amino-acid chain: Somatotropin (217 aa).

A signal peptide spans 1-26 (MATGSHTTTLLLAVALLGLPWPQEAG). Histidine 46 contacts Zn(2+). Cysteine 79 and cysteine 190 are oxidised to a cystine. Residue glutamate 199 coordinates Zn(2+). A disulfide bond links cysteine 207 and cysteine 215.

Belongs to the somatotropin/prolactin family.

The protein resides in the secreted. Plays an important role in growth control. Its major role in stimulating body growth is to stimulate the liver and other tissues to secrete IGF1. It stimulates both the differentiation and proliferation of myoblasts. It also stimulates amino acid uptake and protein synthesis in muscle and other tissues. The polypeptide is Somatotropin (GH1) (Galago senegalensis (Northern lesser bushbaby)).